Here is a 62-residue protein sequence, read N- to C-terminus: Photosystem II reaction center protein Z (62 aa).

The next 2 membrane-spanning stretches (helical) occupy residues 8–28 (AVFA…VVFA) and 41–61 (FSGT…NSLI).

The protein belongs to the PsbZ family. PSII is composed of 1 copy each of membrane proteins PsbA, PsbB, PsbC, PsbD, PsbE, PsbF, PsbH, PsbI, PsbJ, PsbK, PsbL, PsbM, PsbT, PsbY, PsbZ, Psb30/Ycf12, at least 3 peripheral proteins of the oxygen-evolving complex and a large number of cofactors. It forms dimeric complexes.

The protein localises to the plastid. It localises to the chloroplast thylakoid membrane. In terms of biological role, may control the interaction of photosystem II (PSII) cores with the light-harvesting antenna, regulates electron flow through the 2 photosystem reaction centers. PSII is a light-driven water plastoquinone oxidoreductase, using light energy to abstract electrons from H(2)O, generating a proton gradient subsequently used for ATP formation. This Amborella trichopoda protein is Photosystem II reaction center protein Z.